We begin with the raw amino-acid sequence, 417 residues long: Serine hydroxymethyltransferase (417 aa).

(6S)-5,6,7,8-tetrahydrofolate-binding positions include Leu-121 and 125 to 127; that span reads GHL. The residue at position 230 (Lys-230) is an N6-(pyridoxal phosphate)lysine. A (6S)-5,6,7,8-tetrahydrofolate-binding site is contributed by 355 to 357; it reads SPF.

This sequence belongs to the SHMT family. As to quaternary structure, homodimer. It depends on pyridoxal 5'-phosphate as a cofactor.

It is found in the cytoplasm. The enzyme catalyses (6R)-5,10-methylene-5,6,7,8-tetrahydrofolate + glycine + H2O = (6S)-5,6,7,8-tetrahydrofolate + L-serine. Its pathway is one-carbon metabolism; tetrahydrofolate interconversion. The protein operates within amino-acid biosynthesis; glycine biosynthesis; glycine from L-serine: step 1/1. In terms of biological role, catalyzes the reversible interconversion of serine and glycine with tetrahydrofolate (THF) serving as the one-carbon carrier. This reaction serves as the major source of one-carbon groups required for the biosynthesis of purines, thymidylate, methionine, and other important biomolecules. Also exhibits THF-independent aldolase activity toward beta-hydroxyamino acids, producing glycine and aldehydes, via a retro-aldol mechanism. The chain is Serine hydroxymethyltransferase from Legionella pneumophila subsp. pneumophila (strain Philadelphia 1 / ATCC 33152 / DSM 7513).